The chain runs to 546 residues: Sulfite oxidase, mitochondrial (546 aa).

The transit peptide at 1–80 (MLLQLYRSVV…YHEHRCRASQ (80 aa)) directs the protein to the mitochondrion. In terms of domain architecture, Cytochrome b5 heme-binding spans 83–162 (PRMYSKEDVR…LAEYKIGELN (80 aa)). Residue His-119 participates in heme b binding. Position 124 is a phosphoserine (Ser-124). Residues His-144, Gln-146, and His-148 each contribute to the heme b site. The tract at residues 166–175 (SMSPSVEASD) is hinge. A moco domain region spans residues 176–402 (PYADDPIRHP…YSHWQRRDYK (227 aa)). Mo-molybdopterin is bound by residues 216-220 (FTRNH), Cys-265, Asp-323, His-362, Arg-367, and 378-380 (HVK). The interval 403 to 539 (GFSPSVDWDT…RGVLSNAWHR (137 aa)) is homodimerization.

In terms of assembly, homodimer. Requires heme b as cofactor. The cofactor is Mo-molybdopterin.

It localises to the mitochondrion intermembrane space. It carries out the reaction sulfite + O2 + H2O = sulfate + H2O2. The protein operates within energy metabolism; sulfur metabolism. Catalyzes the oxidation of sulfite to sulfate, the terminal reaction in the oxidative degradation of sulfur-containing amino acids. The polypeptide is Sulfite oxidase, mitochondrial (Suox) (Mus musculus (Mouse)).